We begin with the raw amino-acid sequence, 236 residues long: Uridylate kinase (236 aa).

Lysine 10–glycine 13 serves as a coordination point for ATP. Position 52 (glycine 52) interacts with UMP. The ATP site is built by glycine 53 and arginine 57. Residues aspartate 72 and threonine 133–threonine 140 each bind UMP. ATP contacts are provided by threonine 160, tyrosine 166, and aspartate 169.

The protein belongs to the UMP kinase family. Homohexamer.

The protein resides in the cytoplasm. It carries out the reaction UMP + ATP = UDP + ADP. It participates in pyrimidine metabolism; CTP biosynthesis via de novo pathway; UDP from UMP (UMPK route): step 1/1. With respect to regulation, inhibited by UTP. Its function is as follows. Catalyzes the reversible phosphorylation of UMP to UDP. This is Uridylate kinase from Ralstonia nicotianae (strain ATCC BAA-1114 / GMI1000) (Ralstonia solanacearum).